The following is a 101-amino-acid chain: Small ribosomal subunit protein bS18c (101 aa).

Residues 1–19 (MDKSKQLFRKSKGSFRRRL) are compositionally biased toward basic residues. Positions 1–23 (MDKSKQLFRKSKGSFRRRLPPIG) are disordered.

Belongs to the bacterial ribosomal protein bS18 family. As to quaternary structure, part of the 30S ribosomal subunit.

It localises to the plastid. Its subcellular location is the chloroplast. This is Small ribosomal subunit protein bS18c from Acorus gramineus (Dwarf sweet flag).